A 128-amino-acid polypeptide reads, in one-letter code: MVLPKHMRLKGHRCFDFIYKEGSRFYSSSMVLRVTDANKKPQVKGKQSKTRPSIKCAISISNKVSKKSVTRNKLRRLFHHHLSLRLSNMSCDKEIWAFISLKPSSMKNSYSTLLKECDKLLTKAGITK.

This sequence belongs to the RnpA family. As to quaternary structure, consists of a catalytic RNA component (M1 or rnpB) and a protein subunit.

The catalysed reaction is Endonucleolytic cleavage of RNA, removing 5'-extranucleotides from tRNA precursor.. RNaseP catalyzes the removal of the 5'-leader sequence from pre-tRNA to produce the mature 5'-terminus. It can also cleave other RNA substrates such as 4.5S RNA. The protein component plays an auxiliary but essential role in vivo by binding to the 5'-leader sequence and broadening the substrate specificity of the ribozyme. The sequence is that of Ribonuclease P protein component from Prochlorococcus marinus (strain NATL1A).